The sequence spans 177 residues: ATP synthase subunit delta (177 aa).

It belongs to the ATPase delta chain family. As to quaternary structure, F-type ATPases have 2 components, F(1) - the catalytic core - and F(0) - the membrane proton channel. F(1) has five subunits: alpha(3), beta(3), gamma(1), delta(1), epsilon(1). F(0) has three main subunits: a(1), b(2) and c(10-14). The alpha and beta chains form an alternating ring which encloses part of the gamma chain. F(1) is attached to F(0) by a central stalk formed by the gamma and epsilon chains, while a peripheral stalk is formed by the delta and b chains.

It is found in the cell inner membrane. In terms of biological role, f(1)F(0) ATP synthase produces ATP from ADP in the presence of a proton or sodium gradient. F-type ATPases consist of two structural domains, F(1) containing the extramembraneous catalytic core and F(0) containing the membrane proton channel, linked together by a central stalk and a peripheral stalk. During catalysis, ATP synthesis in the catalytic domain of F(1) is coupled via a rotary mechanism of the central stalk subunits to proton translocation. Functionally, this protein is part of the stalk that links CF(0) to CF(1). It either transmits conformational changes from CF(0) to CF(1) or is implicated in proton conduction. This Neisseria meningitidis serogroup B (strain ATCC BAA-335 / MC58) protein is ATP synthase subunit delta.